A 161-amino-acid chain; its full sequence is MHRSEPFLKMSLLILLFLGLAEACTPREVATKEKINLLKGIIGLMSRLSPDGLRHNITSLKMPPLVSPQDRTEEEIKKILGLLSLQVLHEETSGCKEEVKPFSGTTPSRKPLPKRKNTWNFLKCAYMVMTYLFVSYNKGDWCYCHYCNLELDIRDDPCCSF.

Positions 1-23 are cleaved as a signal peptide; it reads MHRSEPFLKMSLLILLFLGLAEA. Residue N56 is glycosylated (N-linked (GlcNAc...) asparagine).

The protein resides in the secreted. This is Epididymal protein 13 from Homo sapiens (Human).